A 130-amino-acid chain; its full sequence is Small ribosomal subunit protein bS6 (130 aa).

Residues 100–130 form a disordered region; that stretch reads SPMVKAKDERRERREDFAEAGDDVDAGDSEE. Basic and acidic residues predominate over residues 104–116; it reads KAKDERRERREDF. Residues 117–130 show a composition bias toward acidic residues; that stretch reads AEAGDDVDAGDSEE.

Belongs to the bacterial ribosomal protein bS6 family.

In terms of biological role, binds together with bS18 to 16S ribosomal RNA. This is Small ribosomal subunit protein bS6 from Pectobacterium carotovorum subsp. carotovorum (strain PC1).